Here is a 346-residue protein sequence, read N- to C-terminus: Cyclin-dependent kinase 20 (346 aa).

Positions 4-288 (YCILGRIGEG…ASKALLHQYF (285 aa)) constitute a Protein kinase domain. Residues 10 to 18 (IGEGAHGIV) and K33 each bind ATP. D127 functions as the Proton acceptor in the catalytic mechanism.

Belongs to the protein kinase superfamily. CMGC Ser/Thr protein kinase family. CDC2/CDKX subfamily. Monomer. Interacts with TBC1D32 and MAK.

The protein localises to the nucleus. The protein resides in the cytoplasm. Its subcellular location is the cell projection. It is found in the cilium. The catalysed reaction is L-seryl-[protein] + ATP = O-phospho-L-seryl-[protein] + ADP + H(+). It catalyses the reaction L-threonyl-[protein] + ATP = O-phospho-L-threonyl-[protein] + ADP + H(+). Required for high-level Shh responses in the developing neural tube. Together with TBC1D32, controls the structure of the primary cilium by coordinating assembly of the ciliary membrane and axoneme, allowing GLI2 to be properly activated in response to SHH signaling. Involved in cell growth. Activates CDK2, a kinase involved in the control of the cell cycle, by phosphorylating residue 'Thr-160'. The protein is Cyclin-dependent kinase 20 (CDK20) of Pongo abelii (Sumatran orangutan).